Reading from the N-terminus, the 410-residue chain is uncharacterized protein (410 aa).

The next 11 helical transmembrane spans lie at 14-34, 48-68, 82-102, 140-160, 164-184, 212-232, 251-271, 279-299, 303-323, 342-362, and 371-391; these read IIIG…FLAI, GLVI…GGYI, IFGW…WVFF, YAAI…FGSS, TPFL…ALQF, YLFT…SQFS, LYGL…FPIV, PLCS…IFTV, VPSI…LFSM, GAIG…GICI, and IYIF…LAFA.

It belongs to the major facilitator superfamily. TCR/Tet family.

The protein localises to the cell membrane. This is an uncharacterized protein from Bacillus subtilis (strain 168).